The primary structure comprises 239 residues: Leucyl/phenylalanyl-tRNA--protein transferase (239 aa).

The protein belongs to the L/F-transferase family.

It localises to the cytoplasm. It carries out the reaction N-terminal L-lysyl-[protein] + L-leucyl-tRNA(Leu) = N-terminal L-leucyl-L-lysyl-[protein] + tRNA(Leu) + H(+). The enzyme catalyses N-terminal L-arginyl-[protein] + L-leucyl-tRNA(Leu) = N-terminal L-leucyl-L-arginyl-[protein] + tRNA(Leu) + H(+). The catalysed reaction is L-phenylalanyl-tRNA(Phe) + an N-terminal L-alpha-aminoacyl-[protein] = an N-terminal L-phenylalanyl-L-alpha-aminoacyl-[protein] + tRNA(Phe). In terms of biological role, functions in the N-end rule pathway of protein degradation where it conjugates Leu, Phe and, less efficiently, Met from aminoacyl-tRNAs to the N-termini of proteins containing an N-terminal arginine or lysine. The polypeptide is Leucyl/phenylalanyl-tRNA--protein transferase (Aliivibrio fischeri (strain ATCC 700601 / ES114) (Vibrio fischeri)).